The primary structure comprises 522 residues: Protein nucleotidyltransferase YdiU (522 aa).

Positions 109, 111, 112, 132, 144, 145, 195, and 202 each coordinate ATP. Residue D271 is the Proton acceptor of the active site. 2 residues coordinate Mg(2+): N272 and D281. D281 contacts ATP.

The protein belongs to the SELO family. Mg(2+) serves as cofactor. Mn(2+) is required as a cofactor.

The enzyme catalyses L-seryl-[protein] + ATP = 3-O-(5'-adenylyl)-L-seryl-[protein] + diphosphate. It catalyses the reaction L-threonyl-[protein] + ATP = 3-O-(5'-adenylyl)-L-threonyl-[protein] + diphosphate. It carries out the reaction L-tyrosyl-[protein] + ATP = O-(5'-adenylyl)-L-tyrosyl-[protein] + diphosphate. The catalysed reaction is L-histidyl-[protein] + UTP = N(tele)-(5'-uridylyl)-L-histidyl-[protein] + diphosphate. The enzyme catalyses L-seryl-[protein] + UTP = O-(5'-uridylyl)-L-seryl-[protein] + diphosphate. It catalyses the reaction L-tyrosyl-[protein] + UTP = O-(5'-uridylyl)-L-tyrosyl-[protein] + diphosphate. Nucleotidyltransferase involved in the post-translational modification of proteins. It can catalyze the addition of adenosine monophosphate (AMP) or uridine monophosphate (UMP) to a protein, resulting in modifications known as AMPylation and UMPylation. This chain is Protein nucleotidyltransferase YdiU, found in Burkholderia cenocepacia (strain HI2424).